The primary structure comprises 242 residues: Ribonuclease 3 (242 aa).

An RNase III domain is found at leucine 14 to glycine 142. Glutamate 56 lines the Mg(2+) pocket. Aspartate 60 is a catalytic residue. Positions 128 and 131 each coordinate Mg(2+). Glutamate 131 is a catalytic residue. The DRBM domain maps to asparagine 170–serine 235.

Belongs to the ribonuclease III family. As to quaternary structure, homodimer. Mg(2+) is required as a cofactor.

It localises to the cytoplasm. The enzyme catalyses Endonucleolytic cleavage to 5'-phosphomonoester.. Digests double-stranded RNA. Involved in the processing of primary rRNA transcript to yield the immediate precursors to the large and small rRNAs (23S and 16S). Processes some mRNAs, and tRNAs when they are encoded in the rRNA operon. Processes pre-crRNA and tracrRNA of type II CRISPR loci if present in the organism. The polypeptide is Ribonuclease 3 (Gloeobacter violaceus (strain ATCC 29082 / PCC 7421)).